Here is a 139-residue protein sequence, read N- to C-terminus: D-ribose pyranase (139 aa).

Residue His-20 is the Proton donor of the active site. Substrate is bound by residues Asp-28, His-106, and 128–130 (FAN).

Belongs to the RbsD / FucU family. RbsD subfamily. As to quaternary structure, homodecamer.

It is found in the cytoplasm. The enzyme catalyses beta-D-ribopyranose = beta-D-ribofuranose. It participates in carbohydrate metabolism; D-ribose degradation; D-ribose 5-phosphate from beta-D-ribopyranose: step 1/2. Catalyzes the interconversion of beta-pyran and beta-furan forms of D-ribose. In Klebsiella pneumoniae (strain 342), this protein is D-ribose pyranase.